Here is a 524-residue protein sequence, read N- to C-terminus: Peptide chain release factor 3 (524 aa).

The tr-type G domain occupies Ala11–Gly278. GTP-binding positions include Ser20 to Thr27, Asp88 to His92, and Asn142 to Asp145.

This sequence belongs to the TRAFAC class translation factor GTPase superfamily. Classic translation factor GTPase family. PrfC subfamily.

Its subcellular location is the cytoplasm. Its function is as follows. Increases the formation of ribosomal termination complexes and stimulates activities of RF-1 and RF-2. It binds guanine nucleotides and has strong preference for UGA stop codons. It may interact directly with the ribosome. The stimulation of RF-1 and RF-2 is significantly reduced by GTP and GDP, but not by GMP. The chain is Peptide chain release factor 3 from Lacticaseibacillus paracasei (strain ATCC 334 / BCRC 17002 / CCUG 31169 / CIP 107868 / KCTC 3260 / NRRL B-441) (Lactobacillus paracasei).